The following is a 430-amino-acid chain: UDP-N-acetylglucosamine 1-carboxyvinyltransferase (430 aa).

22-23 (KN) lines the phosphoenolpyruvate pocket. Arg-102 contacts UDP-N-acetyl-alpha-D-glucosamine. Cys-126 serves as the catalytic Proton donor. A 2-(S-cysteinyl)pyruvic acid O-phosphothioketal modification is found at Cys-126. UDP-N-acetyl-alpha-D-glucosamine is bound by residues 131–135 (RPVDL), 172–175 (KVSV), Asp-317, and Ile-339.

This sequence belongs to the EPSP synthase family. MurA subfamily.

The protein resides in the cytoplasm. It carries out the reaction phosphoenolpyruvate + UDP-N-acetyl-alpha-D-glucosamine = UDP-N-acetyl-3-O-(1-carboxyvinyl)-alpha-D-glucosamine + phosphate. It functions in the pathway cell wall biogenesis; peptidoglycan biosynthesis. Cell wall formation. Adds enolpyruvyl to UDP-N-acetylglucosamine. The polypeptide is UDP-N-acetylglucosamine 1-carboxyvinyltransferase (Rhizobium johnstonii (strain DSM 114642 / LMG 32736 / 3841) (Rhizobium leguminosarum bv. viciae)).